The primary structure comprises 711 residues: Polyribonucleotide nucleotidyltransferase (711 aa).

Mg(2+) is bound by residues Asp490 and Asp496. Residues 556-615 (PRIETMQIPTDKIREVIGSGGKVIREIVEVSGAKVDINDEGIIKIASPNGEAIKKAYDMI) enclose the KH domain. The region spanning 625 to 693 (GMVYTGTVVK…DRGKVRLSMK (69 aa)) is the S1 motif domain.

This sequence belongs to the polyribonucleotide nucleotidyltransferase family. Mg(2+) serves as cofactor.

It is found in the cytoplasm. It carries out the reaction RNA(n+1) + phosphate = RNA(n) + a ribonucleoside 5'-diphosphate. In terms of biological role, involved in mRNA degradation. Catalyzes the phosphorolysis of single-stranded polyribonucleotides processively in the 3'- to 5'-direction. In Roseobacter denitrificans (strain ATCC 33942 / OCh 114) (Erythrobacter sp. (strain OCh 114)), this protein is Polyribonucleotide nucleotidyltransferase.